Here is a 639-residue protein sequence, read N- to C-terminus: Exocyst complex component EXO70E2 (639 aa).

This sequence belongs to the EXO70 family. Component of the exocyst complex and of the exocyst-positive organelle (EXPO). Interacts with SEC6, SEC10A and SEC10B. As to expression, expressed in roots, in the root-hair zone, both in root hair and nonhair cells.

It localises to the secreted. The protein localises to the extracellular exosome. Its subcellular location is the cell membrane. The protein resides in the cytoplasm. It is found in the endomembrane system. In terms of biological role, influences the subcellular localization patterns of other exocyst complex proteins (e.g. SEC5A, SEC15A, SEC15B and EXO84B) leading to their recruitment to exocyst, well-defined large punctate structures throughout the cytosol. Essential component for the formation and the recruitment of exocyst subunits to the exocyst-positive organelle (EXPO), a secreted double membrane structure also called extracellular exosome, that acts as a sequester for cytosolic proteins to release them into the apoplast. The chain is Exocyst complex component EXO70E2 from Arabidopsis thaliana (Mouse-ear cress).